A 276-amino-acid chain; its full sequence is Protein SCO1 homolog 2, mitochondrial (276 aa).

The transit peptide at 1–14 (MLPCRRLVLSCKNQ) directs the protein to the mitochondrion. Residues 66–82 (YAVPAILLGFAGFVGFL) form a helical membrane-spanning segment. Positions 110-273 (VKGPIIGGPF…SQELLKEVAS (164 aa)) constitute a Thioredoxin domain.

This sequence belongs to the SCO1/2 family. As to expression, expressed in the whole plant with highest expression in imbibed seeds and embryos, and the root hair zone.

Its subcellular location is the mitochondrion inner membrane. Thought to play a role in cellular copper homeostasis, mitochondrial redox signaling or insertion of copper into the active site of COX. Participates in copper and redox homeostasis. This Arabidopsis thaliana (Mouse-ear cress) protein is Protein SCO1 homolog 2, mitochondrial (HCC2).